The chain runs to 367 residues: Undecaprenyl-phosphate alpha-N-acetylglucosaminyl 1-phosphate transferase (367 aa).

10 helical membrane-spanning segments follow: residues 3-23, 46-66, 69-89, 132-152, 158-178, 187-207, 213-233, 242-262, 294-314, and 318-338; these read LLTVSTDLISIFLFTTLFLFF, LIPLVGGISVYAGICFTFGIV, YIPHASLYLACAGVLVFIGAL, VLGPFGYFLTLFAVWAAINAF, IDGLLGGLSCVSFAAIGMILW, IWCFAMIAAILPYIMLNLGIL, VFMGDAGSTLIGFTVIWILLE, ISPVTALWIIAIPLMDMVAIM, AFVLITLAAALLASIGVLAEY, and VPEWVMLVLFLLAFLLYGYCI.

It belongs to the glycosyltransferase 4 family. WecA subfamily. Mg(2+) serves as cofactor. Mn(2+) is required as a cofactor.

Its subcellular location is the cell inner membrane. The catalysed reaction is di-trans,octa-cis-undecaprenyl phosphate + UDP-N-acetyl-alpha-D-glucosamine = N-acetyl-alpha-D-glucosaminyl-di-trans,octa-cis-undecaprenyl diphosphate + UMP. The protein operates within bacterial outer membrane biogenesis; LPS O-antigen biosynthesis. Its pathway is bacterial outer membrane biogenesis; enterobacterial common antigen biosynthesis. In terms of biological role, catalyzes the transfer of the GlcNAc-1-phosphate moiety from UDP-GlcNAc onto the carrier lipid undecaprenyl phosphate (C55-P), yielding GlcNAc-pyrophosphoryl-undecaprenyl (GlcNAc-PP-C55). The polypeptide is Undecaprenyl-phosphate alpha-N-acetylglucosaminyl 1-phosphate transferase (Escherichia coli O157:H7).